Consider the following 505-residue polypeptide: ATP synthase subunit alpha (505 aa).

170–177 (GDRQTGKT) is a binding site for ATP.

This sequence belongs to the ATPase alpha/beta chains family. In terms of assembly, F-type ATPases have 2 components, CF(1) - the catalytic core - and CF(0) - the membrane proton channel. CF(1) has five subunits: alpha(3), beta(3), gamma(1), delta(1), epsilon(1). CF(0) has four main subunits: a(1), b(1), b'(1) and c(9-12).

Its subcellular location is the cellular thylakoid membrane. The catalysed reaction is ATP + H2O + 4 H(+)(in) = ADP + phosphate + 5 H(+)(out). Functionally, produces ATP from ADP in the presence of a proton gradient across the membrane. The alpha chain is a regulatory subunit. The chain is ATP synthase subunit alpha from Synechococcus sp. (strain ATCC 27144 / PCC 6301 / SAUG 1402/1) (Anacystis nidulans).